Consider the following 601-residue polypeptide: Beta-phellandrene synthase (601 aa).

The N-terminal 35 residues, 1–35 (MSTISIHHVGILRNPLPSKNKRALINNPWSLSLPR), are a transit peptide targeting the chloroplast. Asp-356 and Asp-360 together coordinate Mn(2+). Residues 356–360 (DDVYD) carry the DDXXD motif motif. 2 homodimerization regions span residues 362-368 (YGTLDEL) and 434-471 (EAKW…LSIP). Asp-499 and Glu-507 together coordinate Mn(2+).

This sequence belongs to the terpene synthase family. As to quaternary structure, homodimer. The cofactor is Mn(2+). It depends on Mg(2+) as a cofactor. In terms of tissue distribution, expressed in peltate glandular trichomes. Present at low levels in flowers, leaves and stems.

It is found in the plastid. Its subcellular location is the chloroplast. The enzyme catalyses (2E)-geranyl diphosphate = beta-phellandrene + diphosphate. It catalyses the reaction (2E)-geranyl diphosphate = (1R,5R)-sabinene + diphosphate. The protein operates within secondary metabolite biosynthesis; terpenoid biosynthesis. Its function is as follows. Involved in the biosynthesis of phenolic monoterpenes natural products. Monoterpene synthase that catalyzes mainly the formation of olefins such as sabinene and beta-phellandrene, and minor amounts of other monoterpenes (e.g. myrcene, gamma-terpinene, alpha-thujene and alpha-pinene) from geranyl diphosphate (GPP). The chain is Beta-phellandrene synthase from Origanum vulgare (Wild marjoram).